Reading from the N-terminus, the 338-residue chain is Probable tRNA pseudouridine synthase B (338 aa).

Residue Asp82 is the Nucleophile of the active site. One can recognise a PUA domain in the interval 250 to 325 (LPKVWIRDSA…IAVDVDKVFM (76 aa)).

Belongs to the pseudouridine synthase TruB family. Type 2 subfamily.

It carries out the reaction uridine(55) in tRNA = pseudouridine(55) in tRNA. Its function is as follows. Could be responsible for synthesis of pseudouridine from uracil-55 in the psi GC loop of transfer RNAs. The chain is Probable tRNA pseudouridine synthase B from Thermococcus kodakarensis (strain ATCC BAA-918 / JCM 12380 / KOD1) (Pyrococcus kodakaraensis (strain KOD1)).